A 501-amino-acid chain; its full sequence is uncharacterized protein (501 aa).

Catalysis depends on glutamate 236, which acts as the Proton donor. Glutamate 333 functions as the Nucleophile in the catalytic mechanism.

Belongs to the glycosyl hydrolase 5 (cellulase A) family.

Its subcellular location is the mitochondrion intermembrane space. This is an uncharacterized protein from Saccharomyces cerevisiae (strain ATCC 204508 / S288c) (Baker's yeast).